Reading from the N-terminus, the 52-residue chain is Phospholamban (52 aa).

Methionine 1 carries the N-acetylmethionine modification. The Cytoplasmic portion of the chain corresponds to 1–31 (MEKVQYLTRSAIRRASTIEMPQQARQNLQNL). Serine 16 bears the Phosphoserine; by PKA mark. Threonine 17 carries the phosphothreonine; by CaMK2 modification. The helical transmembrane segment at 32–52 (FINFCLILICLLLICIIVMLL) threads the bilayer. Cysteine 36 carries S-palmitoyl cysteine lipidation.

This sequence belongs to the phospholamban family. Homopentamer. Can also form heterooligomers with other sarcoplasmic/endoplasmic reticulum calcium ATPase (SERCA) regulators ARLN, ERLN, SLN and STRIT1/DWORF. Monomer. Interacts with HAX1. Interacts as a monomer with ATP2A2; the interaction decreases ATP2A2 Ca(2+) affinity. Interacts with VMP1; VMP1 competes with PLN and SLN to prevent them from forming an inhibitory complex with ATP2A2. Interacts with S100A1 in a Ca(2+)-dependent manner. Phosphorylated at Thr-17 by CaMK2, and in response to beta-adrenergic stimulation. Phosphorylation by DMPK may stimulate sarcoplasmic reticulum calcium uptake in cardiomyocytes. Phosphorylation by PKA abolishes the inhibition of ATP2A2-mediated calcium uptake. Post-translationally, palmitoylated by ZDHHC16, promoting formation of the homopentamer. In terms of processing, in elongated spermatids, proteolytically cleaved by SPPL2C which modulates intracellular Ca(2+) homeostasis. In terms of tissue distribution, expressed in testis (at protein level). In brain, expressed specifically in GABAergic GAD67+ neurons of the thalamic reticular nucleus where it colocalizes with ATP2A2/SERCA2 (at protein level). Expressed in the bladder and in the atria and ventricles of the heart.

The protein localises to the endoplasmic reticulum membrane. It localises to the sarcoplasmic reticulum membrane. The protein resides in the mitochondrion membrane. Its subcellular location is the membrane. Functionally, reversibly inhibits the activity of ATP2A2/SERCA2 in cardiac sarcoplasmic reticulum by decreasing the apparent affinity of the ATPase for Ca(2+). Binds preferentially to the ATP-bound E1 conformational form of ATP2A2 which predominates at low Ca(2+) concentrations during the diastolic phase of the cardiac cycle. Inhibits ATP2A2 Ca(2+) affinity by disrupting its allosteric activation by ATP. Modulates the contractility of the heart muscle in response to physiological stimuli via its effects on ATP2A2. Modulates calcium re-uptake during muscle relaxation and plays an important role in calcium homeostasis in the heart muscle. The degree of ATP2A2 inhibition depends on the oligomeric state of PLN. ATP2A2 inhibition is alleviated by PLN phosphorylation. Also inhibits the activity of ATP2A3/SERCA3. Controls intracellular Ca(2+) levels in elongated spermatids and may play a role in germ cell differentiation. In the thalamic reticular nucleus of the brain, plays a role in the regulation of sleep patterns and executive functioning. The protein is Phospholamban of Mus musculus (Mouse).